The sequence spans 354 residues: Uroporphyrinogen decarboxylase (354 aa).

Substrate contacts are provided by residues 27–31, D77, Y154, T209, and H327; that span reads RQAGR.

Belongs to the uroporphyrinogen decarboxylase family. As to quaternary structure, homodimer.

The protein resides in the cytoplasm. The enzyme catalyses uroporphyrinogen III + 4 H(+) = coproporphyrinogen III + 4 CO2. It participates in porphyrin-containing compound metabolism; protoporphyrin-IX biosynthesis; coproporphyrinogen-III from 5-aminolevulinate: step 4/4. In terms of biological role, catalyzes the decarboxylation of four acetate groups of uroporphyrinogen-III to yield coproporphyrinogen-III. This is Uroporphyrinogen decarboxylase from Psychromonas ingrahamii (strain DSM 17664 / CCUG 51855 / 37).